The chain runs to 513 residues: MSLSTKREHSGDVTDSSFKRQQRSNKPSSEYTCLGHLVNLIPGKEQKVEITNRNVTTIGRSRSCDVILSEPDISTFHAEFHLLQMDVDNFQRNLINVIDKSRNGTFINGNRLVKKDYILKNGDRIVFGKSCSFLFKYASSSSTDIENDDEKVSSESRSYKNDDEVFKKPQISATSSQNATTSAAIRKLNKTRPVSFFDKYLLGKELGAGHYALVKEAKNKKTGQQVAVKIFHAQQNDDQKKNKQFREETNILMRVQHPNIVNLLDSFVEPISKSQIQKYLVLEKIDDGELFERIVRKTCLRQDESKALFKQLLTGLKYLHEQNIIHRDIKPENILLNITRRENPSQVQLGPWDEDEIDIQVKIADFGLAKFTGEMQFTNTLCGTPSYVAPEVLTKKGYTSKVDLWSAGVILYVCLCGFPPFSDQLGPPSLKEQILQAKYAFYSPYWDKIDDSVLHLISNLLVLNPDERYNIDEALNHPWFNDIQQQSSVSLELQRLQITDNKIPKTYSELSCL.

Over residues 1-12 the composition is skewed to basic and acidic residues; that stretch reads MSLSTKREHSGD. The interval 1 to 29 is disordered; that stretch reads MSLSTKREHSGDVTDSSFKRQQRSNKPSS. Position 10 is a phosphoserine (serine 10). In terms of domain architecture, FHA spans 56–112; it reads TTIGRSRSCDVILSEPDISTFHAEFHLLQMDVDNFQRNLINVIDKSRNGTFINGNRL. Serine 139 bears the Phosphoserine mark. A Protein kinase domain is found at 200 to 480; that stretch reads YLLGKELGAG…IDEALNHPWF (281 aa). ATP contacts are provided by residues 206-214 and lysine 229; that span reads LGAGHYALV. Catalysis depends on aspartate 328, which acts as the Proton acceptor. Threonine 380 is modified (phosphothreonine).

Belongs to the protein kinase superfamily. CAMK Ser/Thr protein kinase family. CHEK2 subfamily. Interacts with the PAB-dependent poly(A)-nuclease (PAN) complex regulatory subunit PAN3 via its forkhead-associated (FHA) domain. In terms of processing, autophosphorylation increases in response to DNA damage.

It localises to the nucleus. It catalyses the reaction L-seryl-[protein] + ATP = O-phospho-L-seryl-[protein] + ADP + H(+). It carries out the reaction L-threonyl-[protein] + ATP = O-phospho-L-threonyl-[protein] + ADP + H(+). In terms of biological role, transducer of the DNA damage signal. Phosphorylates SML1 on serine residues. Cooperates with the PAN deadenylation complex in the regulation of RAD5 mRNA levels and cell survival in response to replicational stress. The sequence is that of DNA damage response protein kinase DUN1 (DUN1) from Saccharomyces cerevisiae (strain ATCC 204508 / S288c) (Baker's yeast).